We begin with the raw amino-acid sequence, 303 residues long: 2-dehydropantoate 2-reductase (303 aa).

NADP(+)-binding positions include 7-12, N98, and A122; that span reads GCGALG. Residue N98 participates in substrate binding. Catalysis depends on K176, which acts as the Proton donor. Residues N180, N184, N194, and S244 each coordinate substrate. Residue E256 coordinates NADP(+).

It belongs to the ketopantoate reductase family. In terms of assembly, monomer.

It is found in the cytoplasm. The catalysed reaction is (R)-pantoate + NADP(+) = 2-dehydropantoate + NADPH + H(+). It participates in cofactor biosynthesis; (R)-pantothenate biosynthesis; (R)-pantoate from 3-methyl-2-oxobutanoate: step 2/2. Catalyzes the NADPH-dependent reduction of ketopantoate into pantoic acid. The chain is 2-dehydropantoate 2-reductase (panE) from Salmonella typhi.